Here is a 311-residue protein sequence, read N- to C-terminus: Aspartate carbamoyltransferase catalytic subunit (311 aa).

Residues R55 and T56 each coordinate carbamoyl phosphate. K85 contacts L-aspartate. The carbamoyl phosphate site is built by R106, H135, and Q138. L-aspartate-binding residues include R168 and R230. The carbamoyl phosphate site is built by L268 and P269.

This sequence belongs to the aspartate/ornithine carbamoyltransferase superfamily. ATCase family. Heterododecamer (2C3:3R2) of six catalytic PyrB chains organized as two trimers (C3), and six regulatory PyrI chains organized as three dimers (R2).

It carries out the reaction carbamoyl phosphate + L-aspartate = N-carbamoyl-L-aspartate + phosphate + H(+). Its pathway is pyrimidine metabolism; UMP biosynthesis via de novo pathway; (S)-dihydroorotate from bicarbonate: step 2/3. In terms of biological role, catalyzes the condensation of carbamoyl phosphate and aspartate to form carbamoyl aspartate and inorganic phosphate, the committed step in the de novo pyrimidine nucleotide biosynthesis pathway. This is Aspartate carbamoyltransferase catalytic subunit from Salmonella paratyphi C (strain RKS4594).